A 366-amino-acid polypeptide reads, in one-letter code: uncharacterized protein (366 aa).

To B.subtilis XkdV.

This is an uncharacterized protein from Bacillus subtilis (strain 168).